A 72-amino-acid polypeptide reads, in one-letter code: Large ribosomal subunit protein bL32c (72 aa).

The segment at 49 to 72 (PPAPVSENWDDEAKGFGKDLDAAE) is disordered. A compositionally biased stretch (basic and acidic residues) spans 59 to 72 (DEAKGFGKDLDAAE).

It belongs to the bacterial ribosomal protein bL32 family.

It localises to the plastid. The protein resides in the chloroplast. The chain is Large ribosomal subunit protein bL32c from Ostreococcus tauri.